The sequence spans 685 residues: Invasion protein InvA (685 aa).

Helical transmembrane passes span 17-37 (ILVL…TYLV), 39-59 (FLIA…FYID), 61-81 (ILSF…RLAL), 110-130 (SLAV…IVIT), 197-217 (AIAG…VGMT), 235-255 (IGDG…AGFI), 274-294 (LLNN…MGTL), and 295-315 (PGFP…LFYF).

Belongs to the FHIPEP (flagella/HR/invasion proteins export pore) family.

It localises to the cell inner membrane. Functionally, involved in the invasion of the cells of the intestinal epithelium. Could be involved in the translocation of the InvE protein. This is Invasion protein InvA (invA) from Salmonella typhi.